The chain runs to 319 residues: Putative antiporter CaxA (319 aa).

The next 10 helical transmembrane spans lie at 3-23, 38-58, 81-101, 105-125, 127-147, 175-195, 208-228, 250-270, 275-292, and 297-317; these read VATIFVLVGLVLLIWSADRFV, MIIGLTIVAMGSSAPEIMVSA, ILLVIGATALLKPIAVASMTI, FPLLILVTLLGYLFLADQSLT, AEGALFLGGFVLFLVLMVYWG, VWLVLGLALLLASSQLLVHGA, LIGLTIIAIGTSLPELAASLI, ILAVLGVGTIIAPGVIDAAAA, YVMMAATLALLLMSLRLG, and INRVEGCILLMAFIGYQYLLF.

The protein belongs to the Ca(2+):cation antiporter (CaCA) (TC 2.A.19) family.

The protein localises to the cell membrane. Functionally, confers modest Ca(2+) and Na(+) resistance. This chain is Putative antiporter CaxA (caxA), found in Alkalimonas amylolytica.